The chain runs to 861 residues: Protein argonaute-4 (861 aa).

In terms of domain architecture, PAZ spans 219–338 (PIIEFMCEVL…LPLEVCNIVA (120 aa)). Residues 509 to 820 (LIVVILPGKT…VAFRARYHLV (312 aa)) form the Piwi domain. A disordered region spans residues 825–846 (DSAEGSHVSGQSNGRDPQALAK).

Belongs to the argonaute family. Ago subfamily. In terms of assembly, interacts with EIF4B, IMP8, PRMT5, TNRC6A and TNRC6B. Interacts with ZFP36. In terms of processing, ubiquitinated on surface-exposed lysines by a SCF-like E3 ubiquitin-protein ligase complex containing ZSWIM8 during target-directed microRNA degradation (TDMD), a process that mediates degradation of microRNAs (miRNAs). Ubiquitination by the SCF-like E3 ubiquitin-protein ligase complex containing ZSWIM8 leads to its subsequent degradation, thereby exposing miRNAs for degradation. ZSWIM8 recognizes and binds AGO4 when it is engaged with a TDMD target.

It localises to the cytoplasm. The protein localises to the P-body. In terms of biological role, required for RNA-mediated gene silencing (RNAi). Binds to short RNAs such as microRNAs (miRNAs) and represses the translation of mRNAs which are complementary to them. Lacks endonuclease activity and does not appear to cleave target mRNAs. The polypeptide is Protein argonaute-4 (Ago4) (Mus musculus (Mouse)).